The primary structure comprises 435 residues: Glutamate-1-semialdehyde 2,1-aminomutase (435 aa).

Position 266 is an N6-(pyridoxal phosphate)lysine (Lys266).

It belongs to the class-III pyridoxal-phosphate-dependent aminotransferase family. HemL subfamily. As to quaternary structure, homodimer. Requires pyridoxal 5'-phosphate as cofactor.

It is found in the cytoplasm. The enzyme catalyses (S)-4-amino-5-oxopentanoate = 5-aminolevulinate. It participates in porphyrin-containing compound metabolism; protoporphyrin-IX biosynthesis; 5-aminolevulinate from L-glutamyl-tRNA(Glu): step 2/2. The protein is Glutamate-1-semialdehyde 2,1-aminomutase of Nitrosomonas europaea (strain ATCC 19718 / CIP 103999 / KCTC 2705 / NBRC 14298).